An 81-amino-acid chain; its full sequence is Photosystem I iron-sulfur center (81 aa).

4Fe-4S ferredoxin-type domains lie at 2–31 (SHIV…MVPW) and 39–68 (MASA…VRVY). Positions 11, 14, 17, 21, 48, 51, 54, and 58 each coordinate [4Fe-4S] cluster.

As to quaternary structure, the eukaryotic PSI reaction center is composed of at least 11 subunits. The cofactor is [4Fe-4S] cluster.

It localises to the plastid. The protein resides in the chloroplast thylakoid membrane. It carries out the reaction reduced [plastocyanin] + hnu + oxidized [2Fe-2S]-[ferredoxin] = oxidized [plastocyanin] + reduced [2Fe-2S]-[ferredoxin]. In terms of biological role, apoprotein for the two 4Fe-4S centers FA and FB of photosystem I (PSI); essential for photochemical activity. FB is the terminal electron acceptor of PSI, donating electrons to ferredoxin. The C-terminus interacts with PsaA/B/D and helps assemble the protein into the PSI complex. Required for binding of PsaD and PsaE to PSI. PSI is a plastocyanin/cytochrome c6-ferredoxin oxidoreductase, converting photonic excitation into a charge separation, which transfers an electron from the donor P700 chlorophyll pair to the spectroscopically characterized acceptors A0, A1, FX, FA and FB in turn. In Stigeoclonium helveticum (Green alga), this protein is Photosystem I iron-sulfur center.